Reading from the N-terminus, the 142-residue chain is Transcriptional regulator MraZ (142 aa).

SpoVT-AbrB domains are found at residues 5–47 and 76–119; these read EYPY…PLAS and ANKA…NPGR.

This sequence belongs to the MraZ family. As to quaternary structure, forms oligomers.

It localises to the cytoplasm. The protein localises to the nucleoid. This Deinococcus deserti (strain DSM 17065 / CIP 109153 / LMG 22923 / VCD115) protein is Transcriptional regulator MraZ.